The following is a 593-amino-acid chain: UvrABC system protein C (593 aa).

In terms of domain architecture, GIY-YIG spans 17–94 (MEPGCYLMKD…IKQYQPRYNI (78 aa)). One can recognise a UVR domain in the interval 199-234 (KTILKSLEERMLTASESLDFERAKEYRDLIQHIQNL).

Belongs to the UvrC family. In terms of assembly, interacts with UvrB in an incision complex.

It localises to the cytoplasm. Its function is as follows. The UvrABC repair system catalyzes the recognition and processing of DNA lesions. UvrC both incises the 5' and 3' sides of the lesion. The N-terminal half is responsible for the 3' incision and the C-terminal half is responsible for the 5' incision. This is UvrABC system protein C from Staphylococcus aureus (strain MRSA252).